The following is an 810-amino-acid chain: Nuclear pore complex protein NUP88 (810 aa).

A disordered region spans residues 1–23; sequence MKFNFNETEDAPDSRRSPTPKEP. Positions 646 to 748 form a coiled coil; it reads APNLKRIIDD…RARVKKSTQK (103 aa).

Part of the nuclear pore complex (NPC). The NPC has an eight-fold symmetrical structure comprising a central transport channel and two rings, the cytoplasmic and nuclear rings, to which eight filaments are attached. The cytoplasmic filaments have loose ends, while the nuclear filaments are joined in a distal ring, forming a nuclear basket. NPCs are highly dynamic in configuration and composition, and can be devided in 3 subcomplexes, the NUP62 subcomplex, the NUP107-160 subcomplex and the NUP93 subcomplex, containing approximately 30 different nucleoporin proteins.

It is found in the nucleus envelope. It localises to the nucleus. The protein localises to the nuclear pore complex. In terms of biological role, involved in the regulation of exportin-mediated nuclear protein export. Required for resistance mediated by multiple R proteins and for the appropriate nuclear accumulation of SNC1 and of the downstream defense signaling components EDS1 and NPR1. Not involved in salt tolerance, ethylene and auxin responses, but required for systemic acquired resistance. This chain is Nuclear pore complex protein NUP88, found in Arabidopsis thaliana (Mouse-ear cress).